The following is a 635-amino-acid chain: DNA mismatch repair protein MutL (635 aa).

It belongs to the DNA mismatch repair MutL/HexB family.

In terms of biological role, this protein is involved in the repair of mismatches in DNA. It is required for dam-dependent methyl-directed DNA mismatch repair. May act as a 'molecular matchmaker', a protein that promotes the formation of a stable complex between two or more DNA-binding proteins in an ATP-dependent manner without itself being part of a final effector complex. The polypeptide is DNA mismatch repair protein MutL (Yersinia pestis bv. Antiqua (strain Angola)).